The chain runs to 366 residues: Chorismate synthase (366 aa).

Arg-48 and Arg-54 together coordinate NADP(+). FMN is bound by residues Arg-125 to Ser-127, Asn-238 to Ala-239, Gly-278, Lys-293 to Ser-297, and Arg-319.

It belongs to the chorismate synthase family. As to quaternary structure, homotetramer. The cofactor is FMNH2.

It catalyses the reaction 5-O-(1-carboxyvinyl)-3-phosphoshikimate = chorismate + phosphate. The protein operates within metabolic intermediate biosynthesis; chorismate biosynthesis; chorismate from D-erythrose 4-phosphate and phosphoenolpyruvate: step 7/7. In terms of biological role, catalyzes the anti-1,4-elimination of the C-3 phosphate and the C-6 proR hydrogen from 5-enolpyruvylshikimate-3-phosphate (EPSP) to yield chorismate, which is the branch point compound that serves as the starting substrate for the three terminal pathways of aromatic amino acid biosynthesis. This reaction introduces a second double bond into the aromatic ring system. The chain is Chorismate synthase from Burkholderia vietnamiensis (strain G4 / LMG 22486) (Burkholderia cepacia (strain R1808)).